A 546-amino-acid chain; its full sequence is Protein FAM124A (546 aa).

Disordered stretches follow at residues 1–37 (MDPKAGGGGEEDDCVDSGAETGGSDYSHLSSTSSELS), 286–360 (FPKP…FQRS), and 488–546 (SSSS…EFYI). Positions 24–36 (SDYSHLSSTSSEL) are enriched in low complexity. Over residues 286 to 302 (FPKPGRVHHASEKKRHS) the composition is skewed to basic residues. Polar residues-rich tracts occupy residues 304 to 324 (PLPSTAVPSHTPGSSQQSPLN) and 347 to 360 (ANSTPNPPWSFQRS). A compositionally biased stretch (low complexity) spans 488-511 (SSSSATARAAPPAPSTSTLTDSSP).

Belongs to the FAM124 family.

The protein is Protein FAM124A (FAM124A) of Homo sapiens (Human).